Consider the following 200-residue polypeptide: Adenylate kinase (200 aa).

10–15 (GAGKGT) is an ATP binding site. The tract at residues 30–59 (STGDMLRAAVAAGTPVGLEAKSIMESGGLV) is NMP. AMP contacts are provided by residues Thr31, Arg36, 57-59 (GLV), 85-88 (GFPR), and Gln92. The LID stretch occupies residues 126–142 (KRAEETAARGQPVRKDD). Arg127 lines the ATP pocket. AMP-binding residues include Arg139 and Arg150. An ATP-binding site is contributed by Lys178.

Belongs to the adenylate kinase family. As to quaternary structure, monomer.

The protein resides in the cytoplasm. It catalyses the reaction AMP + ATP = 2 ADP. It functions in the pathway purine metabolism; AMP biosynthesis via salvage pathway; AMP from ADP: step 1/1. In terms of biological role, catalyzes the reversible transfer of the terminal phosphate group between ATP and AMP. Plays an important role in cellular energy homeostasis and in adenine nucleotide metabolism. This is Adenylate kinase from Methylorubrum populi (strain ATCC BAA-705 / NCIMB 13946 / BJ001) (Methylobacterium populi).